Here is a 102-residue protein sequence, read N- to C-terminus: NADH-quinone oxidoreductase subunit K (102 aa).

A run of 3 helical transmembrane segments spans residues Ile-5 to Leu-25, Ile-31 to Phe-51, and Phe-66 to Phe-86.

It belongs to the complex I subunit 4L family. In terms of assembly, NDH-1 is composed of 14 different subunits. Subunits NuoA, H, J, K, L, M, N constitute the membrane sector of the complex.

It is found in the cell inner membrane. The catalysed reaction is a quinone + NADH + 5 H(+)(in) = a quinol + NAD(+) + 4 H(+)(out). NDH-1 shuttles electrons from NADH, via FMN and iron-sulfur (Fe-S) centers, to quinones in the respiratory chain. The immediate electron acceptor for the enzyme in this species is believed to be ubiquinone. Couples the redox reaction to proton translocation (for every two electrons transferred, four hydrogen ions are translocated across the cytoplasmic membrane), and thus conserves the redox energy in a proton gradient. This Mesorhizobium japonicum (strain LMG 29417 / CECT 9101 / MAFF 303099) (Mesorhizobium loti (strain MAFF 303099)) protein is NADH-quinone oxidoreductase subunit K.